The chain runs to 158 residues: Snaclec coagulation factor X-activating enzyme light chain 2 (158 aa).

Residues 1-23 form the signal peptide; sequence MGRSISVSFGLLAVFLSLSGTGA. 3 cysteine pairs are disulfide-bonded: Cys27–Cys38, Cys55–Cys152, and Cys127–Cys144. One can recognise a C-type lectin domain in the interval 34–153; sequence YRYFCYRVFK…CEEPYPFVCK (120 aa).

Belongs to the snaclec family. As to quaternary structure, heterotrimer; disulfide-linked. The heterotrimer consists of 1 heavy chain (a metalloproteinase) and 2 light chains: LC1 and LC2. In terms of tissue distribution, expressed by the venom gland.

The protein localises to the secreted. Functionally, regulatory subunit of the blood coagulation factor X-activating enzyme. Activates coagulation factor X (F10) by cleaving the Arg-Ile bond at position 234, activates coagulation factor IX (F9) by cleaving the Arg-Val bond at position 226 and is also able to activate protein C (PROC). May serve as an exosite by which the enzyme recognizes and binds to the Gla domain of factor X (F10) in a calcium-dependent manner. This chain is Snaclec coagulation factor X-activating enzyme light chain 2 (LC2), found in Macrovipera lebetinus (Levantine viper).